Consider the following 201-residue polypeptide: U1 small nuclear ribonucleoprotein C (201 aa).

The Matrin-type zinc-finger motif lies at 4-36; the sequence is YYCEYCDIYLTHSSPVGRRQHNQGRKHISAKIE. Residues 137–154 show a composition bias toward low complexity; that stretch reads IQKPYNNFDNKNNNYNNK. Residues 137 to 176 form a disordered region; sequence IQKPYNNFDNKNNNYNNKPITNSSYKNDKQDYRNNNENND.

The protein belongs to the U1 small nuclear ribonucleoprotein C family. U1 snRNP is composed of the 7 core Sm proteins B/B', D1, D2, D3, E, F and G that assemble in a heptameric protein ring on the Sm site of the small nuclear RNA to form the core snRNP, and at least 3 U1 snRNP-specific proteins U1-70K, U1-A and U1-C. U1-C interacts with U1 snRNA and the 5' splice-site region of the pre-mRNA.

Its subcellular location is the nucleus. In terms of biological role, component of the spliceosomal U1 snRNP, which is essential for recognition of the pre-mRNA 5' splice-site and the subsequent assembly of the spliceosome. U1-C is directly involved in initial 5' splice-site recognition for both constitutive and regulated alternative splicing. The interaction with the 5' splice-site seems to precede base-pairing between the pre-mRNA and the U1 snRNA. Stimulates commitment or early (E) complex formation by stabilizing the base pairing of the 5' end of the U1 snRNA and the 5' splice-site region. In Plasmodium yoelii yoelii, this protein is U1 small nuclear ribonucleoprotein C.